Reading from the N-terminus, the 129-residue chain is MADIIKQLEQEEIARLGKTIPSFAPGDTVVVGVNVVEGTRKRVQAYEGVVIAIRNRGLNSSFIVRKISSGEGVERTFQTYSPLIASIEVKRRGDVRRSKLYYLRERSGKSARIKEKLQLRAPKETSSAE.

This sequence belongs to the bacterial ribosomal protein bL19 family.

Functionally, this protein is located at the 30S-50S ribosomal subunit interface and may play a role in the structure and function of the aminoacyl-tRNA binding site. The chain is Large ribosomal subunit protein bL19 from Methylobacillus flagellatus (strain ATCC 51484 / DSM 6875 / VKM B-1610 / KT).